Consider the following 96-residue polypeptide: Cobalt transport protein CbiN (96 aa).

The next 2 membrane-spanning stretches (helical) occupy residues 4–24 (WLAA…VSAG) and 59–79 (IESL…GYYL).

This sequence belongs to the CbiN family. As to quaternary structure, forms an energy-coupling factor (ECF) transporter complex composed of an ATP-binding protein (A component, CbiO), a transmembrane protein (T component, CbiQ) and 2 possible substrate-capture proteins (S components, CbiM and CbiN) of unknown stoichimetry.

It localises to the cell membrane. It participates in cofactor biosynthesis; adenosylcobalamin biosynthesis. Its function is as follows. Part of the energy-coupling factor (ECF) transporter complex CbiMNOQ involved in cobalt import. The sequence is that of Cobalt transport protein CbiN from Halobacterium salinarum (strain ATCC 29341 / DSM 671 / R1).